Reading from the N-terminus, the 86-residue chain is YcgL domain-containing protein Smlt4554 (86 aa).

One can recognise a YcgL domain in the interval 1–85; sequence MHAYVYKSQL…SVASLMPRHY (85 aa).

This chain is YcgL domain-containing protein Smlt4554, found in Stenotrophomonas maltophilia (strain K279a).